A 218-amino-acid chain; its full sequence is Adenylate kinase (218 aa).

10-15 (GAGKGT) is an ATP binding site. An NMP region spans residues 30-59 (STGDMLRAAVKQGTPLGQEAKKVMDAGGLV). Residues T31, R36, 57–59 (GLV), 85–88 (GFPR), and Q92 each bind AMP. The LID stretch occupies residues 122-159 (GRRVHPASGRSYHVRFNPPKQEGLDDVTGEPLVQRDDD). ATP-binding positions include R123 and 132-133 (SY). AMP-binding residues include R156 and R167. G203 contributes to the ATP binding site.

This sequence belongs to the adenylate kinase family. As to quaternary structure, monomer.

It localises to the cytoplasm. It carries out the reaction AMP + ATP = 2 ADP. The protein operates within purine metabolism; AMP biosynthesis via salvage pathway; AMP from ADP: step 1/1. Its function is as follows. Catalyzes the reversible transfer of the terminal phosphate group between ATP and AMP. Plays an important role in cellular energy homeostasis and in adenine nucleotide metabolism. The protein is Adenylate kinase of Bordetella petrii (strain ATCC BAA-461 / DSM 12804 / CCUG 43448).